The sequence spans 504 residues: Protein Dok-7 (504 aa).

The region spanning 4 to 109 is the PH domain; the sequence is AALVEGQVKL…WDARIRYALG (106 aa). The IRS-type PTB domain occupies 105–210; the sequence is RYALGEVHRF…RGISPTKGPF (106 aa). Disordered stretches follow at residues 210 to 229, 249 to 351, and 411 to 483; these read FGLR…TVEE, SHAG…YSSS, and LCLA…PHAG. Composition is skewed to low complexity over residues 263 to 279 and 288 to 310; these read LSSS…SASS and SSSS…AGEA. The span at 331–341 shows a compositional bias: polar residues; that stretch reads GRQSSSDSGIA.

Homodimer. Forms a heterotetramer composed of 2 DOK7 and 2 MUSK molecules which facilitates MUSK trans-autophosphorylation on tyrosine residue and activation. Interacts (via IRS-type PTB domain) with MUSK (via cytoplasmic part); requires MUSK phosphorylation. As to expression, preferentially expressed in skeletal muscle and heart. Present in thigh muscle, diaphragm and heart but not in the liver or spleen (at protein level).

The protein resides in the cell membrane. The protein localises to the synapse. Functionally, probable muscle-intrinsic activator of MUSK that plays an essential role in neuromuscular synaptogenesis. Acts in aneural activation of MUSK and subsequent acetylcholine receptor (AchR) clustering in myotubes. Induces autophosphorylation of MUSK. In Homo sapiens (Human), this protein is Protein Dok-7 (DOK7).